Consider the following 407-residue polypeptide: Phosphopentomutase (407 aa).

Mn(2+) is bound by residues Asp10, Asp306, His311, Asp347, His348, and His359.

It belongs to the phosphopentomutase family. Requires Mn(2+) as cofactor.

It is found in the cytoplasm. It carries out the reaction 2-deoxy-alpha-D-ribose 1-phosphate = 2-deoxy-D-ribose 5-phosphate. The enzyme catalyses alpha-D-ribose 1-phosphate = D-ribose 5-phosphate. It functions in the pathway carbohydrate degradation; 2-deoxy-D-ribose 1-phosphate degradation; D-glyceraldehyde 3-phosphate and acetaldehyde from 2-deoxy-alpha-D-ribose 1-phosphate: step 1/2. In terms of biological role, isomerase that catalyzes the conversion of deoxy-ribose 1-phosphate (dRib-1-P) and ribose 1-phosphate (Rib-1-P) to deoxy-ribose 5-phosphate (dRib-5-P) and ribose 5-phosphate (Rib-5-P), respectively. This is Phosphopentomutase from Erwinia tasmaniensis (strain DSM 17950 / CFBP 7177 / CIP 109463 / NCPPB 4357 / Et1/99).